A 397-amino-acid chain; its full sequence is Diphosphomevalonate decarboxylase (397 aa).

(R)-5-diphosphomevalonate contacts are provided by residues 19-22 (YWGK), Arg74, 153-158 (SGSACR), and Thr209. A disordered region spans residues 378–397 (GPGPQDTKSSLIDPETGLPR).

It belongs to the diphosphomevalonate decarboxylase family. As to quaternary structure, homodimer.

It catalyses the reaction (R)-5-diphosphomevalonate + ATP = isopentenyl diphosphate + ADP + phosphate + CO2. It functions in the pathway isoprenoid biosynthesis; isopentenyl diphosphate biosynthesis via mevalonate pathway; isopentenyl diphosphate from (R)-mevalonate: step 3/3. In terms of biological role, diphosphomevalonate decarboxylase; part of the second module of ergosterol biosynthesis pathway that includes the middle steps of the pathway. The second module is carried out in the vacuole and involves the formation of farnesyl diphosphate, which is also an important intermediate in the biosynthesis of ubiquinone, dolichol, heme and prenylated proteins. Activity by the mevalonate kinase ERG12 first converts mevalonate into 5-phosphomevalonate. 5-phosphomevalonate is then further converted to 5-diphosphomevalonate by the phosphomevalonate kinase ERG8. The diphosphomevalonate decarboxylase MVD1/ERG19 then produces isopentenyl diphosphate. The isopentenyl-diphosphate delta-isomerase IDI1 then catalyzes the 1,3-allylic rearrangement of the homoallylic substrate isopentenyl (IPP) to its highly electrophilic allylic isomer, dimethylallyl diphosphate (DMAPP). Finally the farnesyl diphosphate synthase ERG20 catalyzes the sequential condensation of isopentenyl pyrophosphate with dimethylallyl pyrophosphate, and then with the resultant geranylpyrophosphate to the ultimate product farnesyl pyrophosphate. This chain is Diphosphomevalonate decarboxylase, found in Eremothecium gossypii (strain ATCC 10895 / CBS 109.51 / FGSC 9923 / NRRL Y-1056) (Yeast).